The primary structure comprises 237 residues: Ribosomal RNA small subunit methyltransferase G (237 aa).

S-adenosyl-L-methionine is bound by residues Gly-75, Phe-80, 127 to 128, and Arg-146; that span reads AE.

The protein belongs to the methyltransferase superfamily. RNA methyltransferase RsmG family.

Its subcellular location is the cytoplasm. Specifically methylates the N7 position of a guanine in 16S rRNA. The chain is Ribosomal RNA small subunit methyltransferase G from Synechococcus sp. (strain RCC307).